The chain runs to 246 residues: Zorya protein ZorB (246 aa).

The helical transmembrane segment at 20 to 40 (FWISYADLMTAMMVLFLVVMV) threads the bilayer. The OmpA-like domain maps to 86–218 (CHDNRISFGE…RVELRMQFFG (133 aa)).

Belongs to the MotB family.

The protein resides in the cell inner membrane. Component of antiviral defense system Zorya type I, composed of ZorA, ZorB, ZorC and ZorD. Expression of Zorya type I in E.coli (strain MG1655) confers 10,000-fold resistance to phage SECphi27, 100-fold resistance to lambda, and 10-fold resistance to T7. While most T7 infected Zorya-containing cells undergo abortive infection, a minority produce viable phage progeny. These eventually accumulate to a high multiplicity of infection, leading to culture collapse by 2 hours after initial infection. ZorA and ZorB probably assemble in the cell inner membrane and exert their effect there. The sequence is that of Zorya protein ZorB from Escherichia coli O139:H28 (strain E24377A / ETEC).